The sequence spans 411 residues: ATPase family AAA domain-containing protein 3C (411 aa).

177-184 (GPPGTGKT) provides a ligand contact to ATP.

It belongs to the AAA ATPase family.

The polypeptide is ATPase family AAA domain-containing protein 3C (ATAD3C) (Homo sapiens (Human)).